The primary structure comprises 358 residues: Serine/threonine-protein phosphatase 2A activator 2 (358 aa).

Interacts with the phosphatase PP2A catalytic subunits PPH21 and PPH22. Forms a ternary complex with PPH21-TAP42.

The protein resides in the cytoplasm. It carries out the reaction [protein]-peptidylproline (omega=180) = [protein]-peptidylproline (omega=0). In terms of biological role, PPIases accelerate the folding of proteins. It catalyzes the cis-trans isomerization of proline imidic peptide bonds in oligopeptides. Acts as a regulatory subunit for TAP42-associated PP2A-like phosphatases modulating their activity or substrate specificity, probably by inducing a conformational change in the catalytic subunit, a direct target of the PPIase. Can reactivate inactive phosphatase PP2A-phosphatase methylesterase complexes (PP2Ai) in presence of ATP and Mg(2+) by dissociating the inactive form from the complex. Acts also inhibitory at high concentrations. Involved in the regulation of cell cycle progression, mitotic spindle formation and bud morphogenesis. This Saccharomyces cerevisiae (strain ATCC 204508 / S288c) (Baker's yeast) protein is Serine/threonine-protein phosphatase 2A activator 2 (RRD2).